A 387-amino-acid chain; its full sequence is Na(+)/H(+)-K(+) antiporter GerN (387 aa).

11 helical membrane-spanning segments follow: residues 29-49 (PSVLGKLIVGIVIGPAVLGWI), 54-74 (LLTQLSNVGVILLMFMAGLET), 87-107 (LAVALGGIILPFVGGYVSGLV), 114-134 (NAVFLGLLLCATSVSISVQTL), 149-169 (LGAAVFDDILVVILLAFAMSF), 175-195 (VNLTMVILKKVVFFASIILIG), 219-239 (ALIICFSFAYFGELLGIAGII), 263-283 (PIAYAMFVPVFFVSIGMNITF), 290-310 (IWFILALTVIAVLTKLIGCGF), 324-344 (IIGAGMVSRGEVALIIAGTGL), and 347-367 (GLLAQDYFTAIVIVVILTTMI).

The protein belongs to the monovalent cation:proton antiporter 2 (CPA2) transporter (TC 2.A.37) family.

The protein resides in the membrane. In terms of biological role, na(+)/H(+) antiporter that extrudes sodium in exchange for external protons. Can also use potassium as a coupling ion, without completely replacing H(+). This Na(+)/H(+)-K(+) antiport is much more rapid than Na(+)/H(+) antiport. Can also extrude lithium. Important for the inosine-dependent germination of spores. The chain is Na(+)/H(+)-K(+) antiporter GerN (gerN) from Bacillus cereus.